The following is a 327-amino-acid chain: UPF0065 protein in gbd 5'region (327 aa).

The tat-type signal signal peptide spans 1–30; the sequence is MQRRHFIARAGIAAATAALGLAAMPAQAQA.

It belongs to the UPF0065 (bug) family. Post-translationally, predicted to be exported by the Tat system. The position of the signal peptide cleavage has not been experimentally proven.

Its subcellular location is the periplasm. This is UPF0065 protein in gbd 5'region from Cupriavidus necator (Alcaligenes eutrophus).